The chain runs to 204 residues: Large ribosomal subunit protein eL15 (204 aa).

Belongs to the eukaryotic ribosomal protein eL15 family. In terms of assembly, component of the large ribosomal subunit.

Its subcellular location is the cytoplasm. Its function is as follows. Component of the large ribosomal subunit. The ribosome is a large ribonucleoprotein complex responsible for the synthesis of proteins in the cell. This chain is Large ribosomal subunit protein eL15 (rpl15), found in Silurus asotus (Amur catfish).